The primary structure comprises 346 residues: Protein RecA (346 aa).

67–74 provides a ligand contact to ATP; the sequence is GPESSGKT.

The protein belongs to the RecA family.

Its subcellular location is the cytoplasm. Functionally, can catalyze the hydrolysis of ATP in the presence of single-stranded DNA, the ATP-dependent uptake of single-stranded DNA by duplex DNA, and the ATP-dependent hybridization of homologous single-stranded DNAs. It interacts with LexA causing its activation and leading to its autocatalytic cleavage. The protein is Protein RecA of Mycobacterium ulcerans (strain Agy99).